Here is a 597-residue protein sequence, read N- to C-terminus: Arginine--tRNA ligase (597 aa).

Positions 138 to 148 (ANPTGPMHVGH) match the 'HIGH' region motif.

Belongs to the class-I aminoacyl-tRNA synthetase family. In terms of assembly, monomer.

It is found in the cytoplasm. It carries out the reaction tRNA(Arg) + L-arginine + ATP = L-arginyl-tRNA(Arg) + AMP + diphosphate. The polypeptide is Arginine--tRNA ligase (Rhodopseudomonas palustris (strain ATCC BAA-98 / CGA009)).